The following is a 107-amino-acid chain: DNA polymerase delta subunit 4 (107 aa).

A PCNA-interaction protein motif (PIP box) motif is present at residues Met-1 to Arg-16. Positions Met-1 to Glu-35 are disordered. Residues Lys-15–Leu-28 are compositionally biased toward basic and acidic residues.

Belongs to the DNA polymerase delta subunit 4 family. As to quaternary structure, component of the tetrameric DNA polymerase delta complex (Pol-delta4), which consists of POLD1/p125, POLD2/p50, POLD3/p66/p68 and POLD4/p12, with POLD1 bearing DNA polymerase and 3' to 5' proofreading exonuclease activities. Within this complex, directly interacts with POLD1 and POLD2. Directly interacts with PCNA, as do POLD1 and POLD3; this interaction stimulates Pol-delta4 polymerase activity. As POLD1 and POLD2, directly interacts with WRNIP1; this interaction stimulates DNA polymerase delta-mediated DNA synthesis, independently of the presence of PCNA, possibly by increasing initiation frequency. Upon genotoxic stress induced by DNA damaging agents or by replication stress, POLD4 is proteolytically degraded and Pol-delta4 is converted into a trimeric form of the complex (Pol-delta3) that has an increased proofreading activity. The DNA polymerase delta complex interacts with POLDIP2; this interaction is probably mediated through direct binding to POLD2. Post-translationally, ubiquitinated; undergoes 'Lys-48'-linked ubiquitination in response to UV irradiation, leading to proteasomal degradation. This modification is partly mediated by RNF8 and by the DCX(DTL) E3 ubiquitin ligase complex (also called CRL4(CDT2)). Efficient degradation requires the presence of PCNA and is required for the inhibition of fork progression after DNA damage.

The protein resides in the nucleus. In terms of biological role, as a component of the tetrameric DNA polymerase delta 4 complex (Pol-delta4), plays a role in high fidelity genome replication and repair. Within this complex, increases the rate of DNA synthesis and decreases fidelity by regulating POLD1 polymerase and proofreading 3' to 5' exonuclease activity. Pol-delta4 participates in Okazaki fragment processing, through both the short flap pathway, as well as a nick translation system. Under conditions of DNA replication stress, required for the repair of broken replication forks through break-induced replication (BIR), a mechanism that may induce segmental genomic duplications of up to 200 kb. Involved in Pol-delta4 translesion synthesis (TLS) of templates carrying O6-methylguanine or abasic sites. Its degradation in response to DNA damage is required for the inhibition of fork progression and cell survival. The chain is DNA polymerase delta subunit 4 (POLD4) from Bos taurus (Bovine).